We begin with the raw amino-acid sequence, 448 residues long: Probable glycine dehydrogenase (decarboxylating) subunit 1 (448 aa).

It belongs to the GcvP family. N-terminal subunit subfamily. The glycine cleavage system is composed of four proteins: P, T, L and H. In this organism, the P 'protein' is a heterodimer of two subunits.

The enzyme catalyses N(6)-[(R)-lipoyl]-L-lysyl-[glycine-cleavage complex H protein] + glycine + H(+) = N(6)-[(R)-S(8)-aminomethyldihydrolipoyl]-L-lysyl-[glycine-cleavage complex H protein] + CO2. Its function is as follows. The glycine cleavage system catalyzes the degradation of glycine. The P protein binds the alpha-amino group of glycine through its pyridoxal phosphate cofactor; CO(2) is released and the remaining methylamine moiety is then transferred to the lipoamide cofactor of the H protein. The polypeptide is Probable glycine dehydrogenase (decarboxylating) subunit 1 (Staphylococcus aureus (strain Mu3 / ATCC 700698)).